The following is a 370-amino-acid chain: Chaperone protein DnaJ (370 aa).

Positions 6 to 70 (DYYEVLGVQR…EKRSMYDRFG (65 aa)) constitute a J domain. The CR-type zinc-finger motif lies at 128 to 208 (GVEKTIEFRR…CRGEGRVRQT (81 aa)). Zn(2+) is bound by residues C141, C144, C158, C161, C182, C185, C196, and C199. 4 CXXCXGXG motif repeats span residues 141-148 (CPACRGSG), 158-165 (CPKCGGLG), 182-189 (CDMCRGEG), and 196-203 (CRECRGEG).

The protein belongs to the DnaJ family. Homodimer. It depends on Zn(2+) as a cofactor.

It is found in the cytoplasm. Participates actively in the response to hyperosmotic and heat shock by preventing the aggregation of stress-denatured proteins and by disaggregating proteins, also in an autonomous, DnaK-independent fashion. Unfolded proteins bind initially to DnaJ; upon interaction with the DnaJ-bound protein, DnaK hydrolyzes its bound ATP, resulting in the formation of a stable complex. GrpE releases ADP from DnaK; ATP binding to DnaK triggers the release of the substrate protein, thus completing the reaction cycle. Several rounds of ATP-dependent interactions between DnaJ, DnaK and GrpE are required for fully efficient folding. Also involved, together with DnaK and GrpE, in the DNA replication of plasmids through activation of initiation proteins. The sequence is that of Chaperone protein DnaJ from Roseiflexus sp. (strain RS-1).